The primary structure comprises 459 residues: uncharacterized protein (459 aa).

The TRAM domain occupies 9 to 67 (KLEVGQTFPVTIKRLGINGEGVGYFKRQVVFIPGALPGEEVVAETTKIQRGFAEAKVKK). [4Fe-4S] cluster-binding residues include C80, C86, C89, and C168. The S-adenosyl-L-methionine site is built by Q292, Y321, D342, and D390. The active-site Nucleophile is C417.

This sequence belongs to the class I-like SAM-binding methyltransferase superfamily. RNA M5U methyltransferase family.

This is an uncharacterized protein from Bacillus anthracis.